Here is a 246-residue protein sequence, read N- to C-terminus: Receptor-transporting protein 4 (246 aa).

At 1-224 (MVVDFWTWEQ…EKLGPSRDPD (224 aa)) the chain is on the cytoplasmic side. The segment at 48–159 (RAFGWFRCSS…DTANCEACTL (112 aa)) adopts a 3CxxC-type zinc-finger fold. The chain crosses the membrane as a helical span at residues 225 to 245 (PLNICVFILLLVFIVVKCFTS).

It belongs to the TMEM7 family. In terms of assembly, interacts with TASR16. Interacts with OPRD1 and OPRM1; the interaction promotes cell surface localization of the OPDR1-OPRM1 heterodimer. As to quaternary structure, (Microbial infection) Interacts with influenza A virus protein NS1; this interaction sequesters NS1 from interacting with RIG-I/DDX58 to restore antiviral signaling. As to expression, expressed in circumvallate papillae and testis.

The protein localises to the membrane. It is found in the cytoplasm. Chaperone protein that facilitates the trafficking and functional cell surface expression of some G-protein coupled receptors (GPCRs). Promotes functional expression of the bitter taste receptor TAS2R16. Also promotes functional expression of the opioid receptor heterodimer OPRD1-OPRM1. In addition, acts as a potent IFN-inducible suppressor of pathogens including lyssavirus rabies, influenza A or yellow fever virus. Mechanistically, associates with the viral replicase, binds viral RNA, and thereby suppresses viral genome amplification that replicates at the endoplasmic reticulum. In addition, restores antiviral signaling by interacting with and sequestering influenza A virus protein NS1. This Homo sapiens (Human) protein is Receptor-transporting protein 4 (RTP4).